Reading from the N-terminus, the 320-residue chain is Nucleotide-binding protein Pcryo_0127 (320 aa).

32-39 (GRSGSGKT) is a binding site for ATP. Position 82 to 85 (82 to 85 (DIRT)) interacts with GTP.

Belongs to the RapZ-like family.

Displays ATPase and GTPase activities. This Psychrobacter cryohalolentis (strain ATCC BAA-1226 / DSM 17306 / VKM B-2378 / K5) protein is Nucleotide-binding protein Pcryo_0127.